A 321-amino-acid polypeptide reads, in one-letter code: CRISPR system ring nuclease SSO1393 (321 aa).

This sequence belongs to the cOA ring nuclease family. In terms of assembly, homodimer. Does not require a metal cofactor. serves as cofactor.

Its subcellular location is the cytoplasm. It carries out the reaction cyclic tetraadenylate = 2 5'-hydroxy-diadenylate 2',3'-cylic phosphate. Its function is as follows. CRISPR (clustered regularly interspaced short palindromic repeat) is an adaptive immune system that provides protection against mobile genetic elements (viruses, transposable elements and conjugative plasmids). CRISPR clusters contain spacers, sequences complementary to antecedent mobile elements, and target invading nucleic acids. CRISPR clusters are transcribed and processed into CRISPR RNA (crRNA). A nuclease that degrades cyclic oligoadenylates (cOA), second messengers that induce an antiviral state important for defense against invading nucleic acids. Destruction of cOA deactivates the Csx1 ribonuclease, preventing uncontrolled degradation of cellular RNA. Slowly degrades cA4 (a tetraadenylate ring) into first a linear tetraadenylate product and secondly into a linear diadenylate product with 5'-OH and 2',3'-cyclic phosphate termini. Is 10-fold less active than SSO2081, suggesting it plays a minor role in cA4 degradation. There may be 2 active sites per homodimer. This Saccharolobus solfataricus (strain ATCC 35092 / DSM 1617 / JCM 11322 / P2) (Sulfolobus solfataricus) protein is CRISPR system ring nuclease SSO1393.